The following is a 192-amino-acid chain: Xanthine phosphoribosyltransferase (192 aa).

Xanthine-binding residues include Leu20 and Asn27. 5-phospho-alpha-D-ribose 1-diphosphate is bound at residue 128–132 (ANGDA). Position 156 (Lys156) interacts with xanthine.

Belongs to the purine/pyrimidine phosphoribosyltransferase family. Xpt subfamily. In terms of assembly, homodimer.

The protein localises to the cytoplasm. It carries out the reaction XMP + diphosphate = xanthine + 5-phospho-alpha-D-ribose 1-diphosphate. Its pathway is purine metabolism; XMP biosynthesis via salvage pathway; XMP from xanthine: step 1/1. Functionally, converts the preformed base xanthine, a product of nucleic acid breakdown, to xanthosine 5'-monophosphate (XMP), so it can be reused for RNA or DNA synthesis. The protein is Xanthine phosphoribosyltransferase of Staphylococcus epidermidis (strain ATCC 35984 / DSM 28319 / BCRC 17069 / CCUG 31568 / BM 3577 / RP62A).